Consider the following 28-residue polypeptide: Apolipoprotein C-I (28 aa).

It belongs to the apolipoprotein C1 family.

It localises to the secreted. In terms of biological role, inhibitor of lipoprotein binding to the low density lipoprotein (LDL) receptor, LDL receptor-related protein, and very low density lipoprotein (VLDL) receptor. Associates with high density lipoproteins (HDL) and the triacylglycerol-rich lipoproteins in the plasma and makes up about 10% of the protein of the VLDL and 2% of that of HDL. Appears to interfere directly with fatty acid uptake and is also the major plasma inhibitor of cholesteryl ester transfer protein (CETP). Binds free fatty acids and reduces their intracellular esterification. Modulates the interaction of APOE with beta-migrating VLDL and inhibits binding of beta-VLDL to the LDL receptor-related protein. In Oryctolagus cuniculus (Rabbit), this protein is Apolipoprotein C-I (APOC1).